Reading from the N-terminus, the 247-residue chain is 3-deoxy-manno-octulosonate cytidylyltransferase (247 aa).

Belongs to the KdsB family.

The protein localises to the cytoplasm. The enzyme catalyses 3-deoxy-alpha-D-manno-oct-2-ulosonate + CTP = CMP-3-deoxy-beta-D-manno-octulosonate + diphosphate. It participates in nucleotide-sugar biosynthesis; CMP-3-deoxy-D-manno-octulosonate biosynthesis; CMP-3-deoxy-D-manno-octulosonate from 3-deoxy-D-manno-octulosonate and CTP: step 1/1. Its pathway is bacterial outer membrane biogenesis; lipopolysaccharide biosynthesis. Its function is as follows. Activates KDO (a required 8-carbon sugar) for incorporation into bacterial lipopolysaccharide in Gram-negative bacteria. This chain is 3-deoxy-manno-octulosonate cytidylyltransferase, found in Chlorobium phaeovibrioides (strain DSM 265 / 1930) (Prosthecochloris vibrioformis (strain DSM 265)).